The following is an 846-amino-acid chain: Sucrose synthase 6 (846 aa).

The tract at residues 276–755 is GT-B glycosyltransferase; it reads CVFTVVIFSI…GLQRIYECYT (480 aa).

The protein belongs to the glycosyltransferase 1 family. Plant sucrose synthase subfamily.

It carries out the reaction an NDP-alpha-D-glucose + D-fructose = a ribonucleoside 5'-diphosphate + sucrose + H(+). Sucrose-cleaving enzyme that provides UDP-glucose and fructose for various metabolic pathways. The protein is Sucrose synthase 6 (SUS6) of Oryza sativa subsp. japonica (Rice).